Reading from the N-terminus, the 303-residue chain is Lipoyl synthase (303 aa).

[4Fe-4S] cluster contacts are provided by Cys40, Cys45, Cys51, Cys67, Cys71, Cys74, and Ser280. A Radical SAM core domain is found at 53–269 (AVRKTATFMI…KEIALSKGFS (217 aa)).

It belongs to the radical SAM superfamily. Lipoyl synthase family. The cofactor is [4Fe-4S] cluster.

Its subcellular location is the cytoplasm. It carries out the reaction [[Fe-S] cluster scaffold protein carrying a second [4Fe-4S](2+) cluster] + N(6)-octanoyl-L-lysyl-[protein] + 2 oxidized [2Fe-2S]-[ferredoxin] + 2 S-adenosyl-L-methionine + 4 H(+) = [[Fe-S] cluster scaffold protein] + N(6)-[(R)-dihydrolipoyl]-L-lysyl-[protein] + 4 Fe(3+) + 2 hydrogen sulfide + 2 5'-deoxyadenosine + 2 L-methionine + 2 reduced [2Fe-2S]-[ferredoxin]. It participates in protein modification; protein lipoylation via endogenous pathway; protein N(6)-(lipoyl)lysine from octanoyl-[acyl-carrier-protein]. Its function is as follows. Catalyzes the radical-mediated insertion of two sulfur atoms into the C-6 and C-8 positions of the octanoyl moiety bound to the lipoyl domains of lipoate-dependent enzymes, thereby converting the octanoylated domains into lipoylated derivatives. The polypeptide is Lipoyl synthase (Halalkalibacterium halodurans (strain ATCC BAA-125 / DSM 18197 / FERM 7344 / JCM 9153 / C-125) (Bacillus halodurans)).